The chain runs to 883 residues: Alanine--tRNA ligase (883 aa).

Residues His565, His569, Cys675, and His679 each contribute to the Zn(2+) site.

This sequence belongs to the class-II aminoacyl-tRNA synthetase family. It depends on Zn(2+) as a cofactor.

The protein resides in the cytoplasm. It carries out the reaction tRNA(Ala) + L-alanine + ATP = L-alanyl-tRNA(Ala) + AMP + diphosphate. In terms of biological role, catalyzes the attachment of alanine to tRNA(Ala) in a two-step reaction: alanine is first activated by ATP to form Ala-AMP and then transferred to the acceptor end of tRNA(Ala). Also edits incorrectly charged Ser-tRNA(Ala) and Gly-tRNA(Ala) via its editing domain. The chain is Alanine--tRNA ligase from Rhodospirillum rubrum (strain ATCC 11170 / ATH 1.1.1 / DSM 467 / LMG 4362 / NCIMB 8255 / S1).